We begin with the raw amino-acid sequence, 862 residues long: DNA gyrase subunit A (862 aa).

The Topo IIA-type catalytic domain occupies 38–501; the sequence is LPDARDGLKP…DYDDIDVEDL (464 aa). Residue Tyr126 is the O-(5'-phospho-DNA)-tyrosine intermediate of the active site. A GyrA-box motif is present at residues 528 to 534; that stretch reads QKRGGKG. The disordered stretch occupies residues 843-862; it reads KEESDDDDIVADDTQEQDME. Over residues 845 to 862 the composition is skewed to acidic residues; that stretch reads ESDDDDIVADDTQEQDME.

The protein belongs to the type II topoisomerase GyrA/ParC subunit family. In terms of assembly, heterotetramer, composed of two GyrA and two GyrB chains. In the heterotetramer, GyrA contains the active site tyrosine that forms a transient covalent intermediate with DNA, while GyrB binds cofactors and catalyzes ATP hydrolysis.

It is found in the cytoplasm. The catalysed reaction is ATP-dependent breakage, passage and rejoining of double-stranded DNA.. In terms of biological role, a type II topoisomerase that negatively supercoils closed circular double-stranded (ds) DNA in an ATP-dependent manner to modulate DNA topology and maintain chromosomes in an underwound state. Negative supercoiling favors strand separation, and DNA replication, transcription, recombination and repair, all of which involve strand separation. Also able to catalyze the interconversion of other topological isomers of dsDNA rings, including catenanes and knotted rings. Type II topoisomerases break and join 2 DNA strands simultaneously in an ATP-dependent manner. In Campylobacter fetus, this protein is DNA gyrase subunit A.